We begin with the raw amino-acid sequence, 1580 residues long: MHSSLEPEKMEEGGGSNSLKRKFSEIDGDQNLDSVSSPMMTDSNGSYELKVYEVAKNRNIIAVLGTGIDKSEITKRLIKAMGSSDTDKRLIIFLAPTVNLVKQQCCEIRALVNLKVEEYFGAKGVDKWTSQRWDEEFSKHDVLVMTPQILLDVLRSAFLKLEMVCLLIIDECHHTTGNHPYAKLMKEFYHESTSKPKIFGLTASAVIRKGIVSSPSNYAAQVSELERLMDSKIFNPEEREGVEKFATTVKEGPILYNPSPSCSLELKEKLETSHLKFDASLRRLQELGKDSFLNMDNKFETYQKRLSIDYREILHCLDNLGLICAHLAAEVCLEKISDTKEESETYKECSMVCKEFLEDILSTIGVYLPQDDKSLVDLQQNHLSAVISGHVSPKLKELFHLLDSFRGDKQKQCLILVERIITAKVIERFVKKEASLAYLNVLYLTENNPSTNVSAQKMQIEIPDLFQHGKVNLLFITDVVEEGFQVPDCSCMVCFDLPKTMCSYSQSQKHAKQSNSKSIMFLERGNPKQRDHLHDLMRREVLIQDPEAPNLKSCPPPVKNGHGVKEIGSMVIPDSNITVSEEAASTQTMSDPPSRNEQLPPCKKLRLDNNLLQSNGKEKVASSKSKSSSSAAGSKKRKELHGTTCANALSGTWGENIDGATFQAYKFDFCCNISGEVYSSFSLLLESTLAEDVGKVEMDLYLVRKLVKASVSPCGQIRLSQEELVKAKYFQQFFFNGMFGKLFVGSKSQGTKREFLLQTDTSSLWHPAFMFLLLPVETNDLASSATIDWSAINSCASIVEFLKKNSLLDLRDSDGNQCNTSSGQEVLLDDKMEETNLIHFANASSDKNSLEELVVIAIHTGRIYSIVEAVSDSSAMSPFEVDASSGYATYAEYFNKKYGIVLAHPNQPLMKLKQSHHAHNLLVDFNEEMVVKTEPKAGNVRKRKPNIHAHLPPELLARIDVPRAVLKSIYLLPSVMHRLESLMLASQLREEIDCSIDNFSISSTSILEAVTTLTCPESFSMERLELLGDSVLKYVASCHLFLKYPDKDEGQLSRQRQSIISNSNLHRLTTSRKLQGYIRNGAFEPRRWTAPGQFSLFPVPCKCGIDTREVPLDPKFFTENMTIKIGKSCDMGHRWVVSKSVSDCAEALIGAYYVSGGLSASLHMMKWLGIDVDFDPNLVVEAINRVSLRCYIPKEDELIELERKIQHEFSAKFLLKEAITHSSLRESYSYERLEFLGDSVLDFLITRHLFNTYEQTGPGEMTDLRSACVNNENFAQVAVKNNLHTHLQRCATVLETQINDYLMSFQKPDETGRSIPSIQGPKALGDVVESIAGALLIDTRLDLDQVWRVFEPLLSPLVTPDKLQLPPYRELNELCDSLGYFFRVKCSNDGVKAQATIQLQLDDVLLTGDGSEQTNKLALGKAASHLLTQLEKRNISRKTSLGDNQSSMDVNLACNHSDRETLTSETTEIQSIVIPFIGPINMKKGGPRGTLHEFCKKHLWPMPTFDTSEEKSRTPFEFIDGGEKRTSFSSFTSTITLRIPNREAVMYAGEARPDKKSSFDSAVVELLYELERRKIVIIQK.

The span at 1–12 (MHSSLEPEKMEE) shows a compositional bias: basic and acidic residues. Residues 1–22 (MHSSLEPEKMEEGGGSNSLKRK) are disordered. Positions 51–223 (VYEVAKNRNI…SPSNYAAQVS (173 aa)) constitute a Helicase ATP-binding domain. Position 64-71 (64-71 (LGTGIDKS)) interacts with ATP. Residues 170-173 (DECH) carry the DECH box motif. The Helicase C-terminal domain maps to 394–562 (KLKELFHLLD…SCPPPVKNGH (169 aa)). Residues 581-597 (EEAASTQTMSDPPSRNE) show a composition bias toward polar residues. 2 disordered regions span residues 581-601 (EEAA…QLPP) and 613-638 (QSNG…KKRK). The segment covering 622–633 (SSKSKSSSSAAG) has biased composition (low complexity). The region spanning 836 to 960 (NLIHFANASS…LPPELLARID (125 aa)) is the PAZ domain. 2 consecutive RNase III domains span residues 985–1157 (ASQL…VSGG) and 1198–1340 (LIEL…IDTR). The Mg(2+) site is built by Glu-1234, Asp-1326, and Glu-1329.

This sequence belongs to the helicase family. Dicer subfamily. As to quaternary structure, interacts with DRB2 and DRB5. Requires Mg(2+) as cofactor. Mn(2+) serves as cofactor.

The protein localises to the nucleus. It is found in the nucleolus. Ribonuclease (RNase) III involved in RNA-mediated post-transcriptional gene silencing (PTGS). Involved in the processing of repeat-associated small interfering RNAs (ra-siRNAs, derived from heterochromatin and DNA repeats such as transposons) by cleaving small dsRNAs into 24 nucleotide ra-siRNAs. Plays a role in antiviral RNA silencing. Involved in the production of viral siRNAs derived from the cabbage leaf curl virus (CaLCuV) and tobacco rattle virus (TRV). Targeted by the viral silencing suppressor (VSR) protein 2b of the cucumber mosaic virus (CMV) that inactivates DCL3 function in RNA silencing. Acts redundantly with DICER-LIKE 1 (DCL1) to promote flowering via repression of FLOWERING LOCUS C (FLC). Does not seem to be involved in microRNAs (miRNAs) processing. The chain is Endoribonuclease Dicer homolog 3 (DCL3) from Arabidopsis thaliana (Mouse-ear cress).